The primary structure comprises 149 residues: Transcriptional repressor NrdR (149 aa).

A zinc finger spans residues 3 to 34 (CPFCTAKDTKVIDSRLVGGGHQVRRRRECNDC). In terms of domain architecture, ATP-cone spans 49 to 139 (PRVIKQDGSR…VYRSFEDIRE (91 aa)).

It belongs to the NrdR family. Zn(2+) serves as cofactor.

In terms of biological role, negatively regulates transcription of bacterial ribonucleotide reductase nrd genes and operons by binding to NrdR-boxes. In Pseudoalteromonas translucida (strain TAC 125), this protein is Transcriptional repressor NrdR.